Consider the following 246-residue polypeptide: Fasciclin-like arabinogalactan protein 11 (246 aa).

A signal peptide spans 1-24 (MATSRTFIFSNLFIFFLVIATTYG). Residues 34 to 179 (PTNITAILEK…LAVYQVDQVL (146 aa)) enclose the FAS1 domain. N-linked (GlcNAc...) asparagine glycosylation is found at Asn-36, Asn-68, Asn-141, and Asn-150. The disordered stretch occupies residues 193–222 (PAPEKGGSVSKGSASGGDDGGDSTDSSDAE). Residue Ser-219 is the site of GPI-anchor amidated serine attachment. Positions 220 to 246 (DAERTGFGFGIRITTVAAIAASSSLWI) are cleaved as a propeptide — removed in mature form.

Belongs to the fasciclin-like AGP family. In terms of tissue distribution, expressed in the sclerenchyma cells of inflorescence stems and siliques.

It is found in the cell membrane. Its function is as follows. May be a cell surface adhesion protein. This is Fasciclin-like arabinogalactan protein 11 (FLA11) from Arabidopsis thaliana (Mouse-ear cress).